A 543-amino-acid polypeptide reads, in one-letter code: Carboxypeptidase Y homolog A (543 aa).

An N-terminal signal peptide occupies residues 1 to 17; it reads MRVAASALLAGAASAAV. The propeptide occupies 18–128; it reads APQQQILKFP…KLEQFDLRVK (111 aa). Disulfide bonds link Cys-182-Cys-421, Cys-316-Cys-330, Cys-340-Cys-363, Cys-347-Cys-356, and Cys-385-Cys-391. Asn-213 carries N-linked (GlcNAc...) asparagine glycosylation. Ser-269 is a catalytic residue. Residue Asp-460 is part of the active site. An N-linked (GlcNAc...) asparagine glycan is attached at Asn-508. The active site involves His-519.

It belongs to the peptidase S10 family.

The protein localises to the vacuole. The enzyme catalyses Release of a C-terminal amino acid with broad specificity.. In terms of biological role, vacuolar carboxypeptidase involved in degradation of small peptides. Digests preferentially peptides containing an aliphatic or hydrophobic residue in P1' position, as well as methionine, leucine or phenylalanine in P1 position of ester substrate. This Phaeosphaeria nodorum (strain SN15 / ATCC MYA-4574 / FGSC 10173) (Glume blotch fungus) protein is Carboxypeptidase Y homolog A (CPYA).